A 369-amino-acid chain; its full sequence is N-succinylamino acid racemase (369 aa).

Lys163 acts as the Proton donor in catalysis. Residues Asp188, Glu213, and Asp238 each contribute to the Mg(2+) site. Lys262 acts as the Proton acceptor in catalysis.

This sequence belongs to the mandelate racemase/muconate lactonizing enzyme family. MenC type 2 subfamily. As to quaternary structure, homooctamer. Tetramer of dimers. Requires a divalent metal cation as cofactor.

It catalyses the reaction (1R,6R)-6-hydroxy-2-succinyl-cyclohexa-2,4-diene-1-carboxylate = 2-succinylbenzoate + H2O. Functionally, acts as a N-succinylamino acid racemase (NSAR) that catalyzes the racemization of N-succinyl-L-phenylglycine. Also converts 2-succinyl-6-hydroxy-2,4-cyclohexadiene-1-carboxylate (SHCHC) to 2-succinylbenzoate (OSB). Catalyzes both N-succinylamino acid racemization and OSB synthesis at equivalent rates. However, NSAR activity is probably the protein's biological function, because menaquinone biosynthesis genes are missing in this species. This chain is N-succinylamino acid racemase, found in Thermus thermophilus (strain ATCC 27634 / DSM 579 / HB8).